The following is a 203-amino-acid chain: tRNA (guanine-N(7)-)-methyltransferase (203 aa).

Residues glutamate 34, glutamate 59, aspartate 86, and aspartate 107 each coordinate S-adenosyl-L-methionine. Residue aspartate 107 is part of the active site. Substrate contacts are provided by residues lysine 111, aspartate 143, and 181–184 (TSYE).

Belongs to the class I-like SAM-binding methyltransferase superfamily. TrmB family.

The catalysed reaction is guanosine(46) in tRNA + S-adenosyl-L-methionine = N(7)-methylguanosine(46) in tRNA + S-adenosyl-L-homocysteine. It functions in the pathway tRNA modification; N(7)-methylguanine-tRNA biosynthesis. Its function is as follows. Catalyzes the formation of N(7)-methylguanine at position 46 (m7G46) in tRNA. The sequence is that of tRNA (guanine-N(7)-)-methyltransferase from Mycoplasmopsis pulmonis (strain UAB CTIP) (Mycoplasma pulmonis).